We begin with the raw amino-acid sequence, 95 residues long: FXYD domain-containing ion transport regulator 6 (95 aa).

The first 18 residues, 1–18 (MELVLVFLCSLLAPMVLA), serve as a signal peptide directing secretion. The Extracellular segment spans residues 19-35 (SAAEKEKEMDPFHYDYQ). A helical transmembrane segment spans residues 36–57 (TLRIGGLVFAVVLFSVGILLIL). The Cytoplasmic segment spans residues 58–95 (SRRCKCSFNQKPRAPGDEEAQVENLITANATEPQKAEN). The segment at 69-95 (PRAPGDEEAQVENLITANATEPQKAEN) is disordered.

The protein belongs to the FXYD family. Regulatory subunit of the sodium/potassium-transporting ATPase which is composed of a catalytic alpha subunit, a non-catalytic beta subunit and an additional regulatory subunit. The regulatory subunit, a member of the FXYD protein family, modulates the enzymatic activity in a tissue- and isoform-specific way by changing affinities of the Na+/K+-ATPase toward Na(+), K(+) or ATP.

It localises to the cell membrane. Its function is as follows. Associates with and regulates the activity of the sodium/potassium-transporting ATPase (NKA) which catalyzes the hydrolysis of ATP coupled with the exchange of Na(+) and K(+) ions across the plasma membrane. Reduces the apparent affinity for intracellular Na(+) with no change in the apparent affinity for extracellular K(+). In addition to modulating NKA kinetics, may also function as a regulator of NKA localization to the plasma membrane. The chain is FXYD domain-containing ion transport regulator 6 from Homo sapiens (Human).